The primary structure comprises 517 residues: ATP synthase subunit alpha 1 (517 aa).

Position 174–181 (174–181 (GDRQTGKT)) interacts with ATP.

The protein belongs to the ATPase alpha/beta chains family. F-type ATPases have 2 components, CF(1) - the catalytic core - and CF(0) - the membrane proton channel. CF(1) has five subunits: alpha(3), beta(3), gamma(1), delta(1), epsilon(1). CF(0) has three main subunits: a(1), b(2) and c(9-12). The alpha and beta chains form an alternating ring which encloses part of the gamma chain. CF(1) is attached to CF(0) by a central stalk formed by the gamma and epsilon chains, while a peripheral stalk is formed by the delta and b chains.

Its subcellular location is the cell inner membrane. The catalysed reaction is ATP + H2O + 4 H(+)(in) = ADP + phosphate + 5 H(+)(out). Functionally, produces ATP from ADP in the presence of a proton gradient across the membrane. The alpha chain is a regulatory subunit. The sequence is that of ATP synthase subunit alpha 1 from Albidiferax ferrireducens (strain ATCC BAA-621 / DSM 15236 / T118) (Rhodoferax ferrireducens).